Here is a 48-residue protein sequence, read N- to C-terminus: Delta-stichotoxin-Hcr1a (48 aa).

Cystine bridges form between C3–C43, C5–C33, and C26–C44. K48 is subject to Lysine amide; partial; in Delta-stichotoxin-Hcr1f.

This sequence belongs to the sea anemone sodium channel inhibitory toxin family. Type II subfamily. In terms of assembly, probably composed of two peptide chains of 12 and 35 residues connected by two disulfide bonds (Cys-3-Cys-43 and Cys-5-Cys-33). Delta-SHTX-Hcr1f (RTX-VI) may be the result of post-translational modification of delta-SHTX-Hcr1a (RTX-III), which would consist of Arg-13 cleavage.

The protein resides in the secreted. It is found in the nematocyst. In terms of biological role, binds to site 3 of voltage-gated sodium channels and inhibits the inactivation process. Specifically inhibits mammalian Nav1.3/SCN3A and Nav1.6/SCN8A sodium channels, as well as insect BgNav1 and VdNav1 sodium channels. Its function is as follows. Binds to site 3 of voltage-gated sodium channels and inhibits the inactivation process. Specifically inhibits mammalian Nav1.2/SCN3A (low inhibition) and Nav1.6/SCN8A sodium channels, as well as insect BgNav1 and VdNav1 sodium channels. In Radianthus crispa (Leathery sea anemone), this protein is Delta-stichotoxin-Hcr1a.